A 465-amino-acid chain; its full sequence is Biotin biosynthesis bifunctional protein BioCD (465 aa).

The segment at 1-254 (MTPFLPDRSI…AYGQWRKPRG (254 aa)) is malonyl-ACP O-methyltransferase. Residues D234 and 263-268 (GVGKTL) contribute to the ATP site. The tract at residues 255 to 465 (VFVTGTDTGV…DSLLSSNASR (211 aa)) is DTB synthetase. T267 serves as a coordination point for Mg(2+). The active site involves K283. T287 is a substrate binding site. Residues D295, 351–354 (EGAG), and 435–437 (PQL) contribute to the ATP site. Residues D295 and E351 each contribute to the Mg(2+) site.

It in the N-terminal section; belongs to the methyltransferase superfamily. In the C-terminal section; belongs to the dethiobiotin synthetase family. Mg(2+) is required as a cofactor.

Its subcellular location is the cytoplasm. The enzyme catalyses (7R,8S)-7,8-diammoniononanoate + CO2 + ATP = (4R,5S)-dethiobiotin + ADP + phosphate + 3 H(+). It carries out the reaction malonyl-[ACP] + S-adenosyl-L-methionine = malonyl-[ACP] methyl ester + S-adenosyl-L-homocysteine. Its pathway is cofactor biosynthesis; biotin biosynthesis; biotin from 7,8-diaminononanoate: step 1/2. It participates in cofactor biosynthesis; biotin biosynthesis. Functionally, converts the free carboxyl group of a malonyl-thioester to its methyl ester by transfer of a methyl group from S-adenosyl-L-methionine (SAM). It allows synthesis of pimeloyl-ACP via the fatty acid synthetic pathway. Catalyzes a mechanistically unusual reaction, the ATP-dependent insertion of CO2 between the N7 and N8 nitrogen atoms of 7,8-diaminopelargonic acid (DAPA, also called 7,8-diammoniononanoate) to form a ureido ring. This chain is Biotin biosynthesis bifunctional protein BioCD, found in Bordetella avium (strain 197N).